The following is a 288-amino-acid chain: ATP synthase gamma chain (288 aa).

This sequence belongs to the ATPase gamma chain family. As to quaternary structure, F-type ATPases have 2 components, CF(1) - the catalytic core - and CF(0) - the membrane proton channel. CF(1) has five subunits: alpha(3), beta(3), gamma(1), delta(1), epsilon(1). CF(0) has three main subunits: a, b and c.

It is found in the cell inner membrane. In terms of biological role, produces ATP from ADP in the presence of a proton gradient across the membrane. The gamma chain is believed to be important in regulating ATPase activity and the flow of protons through the CF(0) complex. The chain is ATP synthase gamma chain from Acidovorax ebreus (strain TPSY) (Diaphorobacter sp. (strain TPSY)).